We begin with the raw amino-acid sequence, 184 residues long: Large ribosomal subunit protein uL5 (184 aa).

Belongs to the universal ribosomal protein uL5 family. As to quaternary structure, part of the 50S ribosomal subunit; part of the 5S rRNA/L5/L18/L25 subcomplex. Contacts the 5S rRNA and the P site tRNA. Forms a bridge to the 30S subunit in the 70S ribosome.

Functionally, this is one of the proteins that bind and probably mediate the attachment of the 5S RNA into the large ribosomal subunit, where it forms part of the central protuberance. In the 70S ribosome it contacts protein S13 of the 30S subunit (bridge B1b), connecting the 2 subunits; this bridge is implicated in subunit movement. Contacts the P site tRNA; the 5S rRNA and some of its associated proteins might help stabilize positioning of ribosome-bound tRNAs. This chain is Large ribosomal subunit protein uL5, found in Wolinella succinogenes (strain ATCC 29543 / DSM 1740 / CCUG 13145 / JCM 31913 / LMG 7466 / NCTC 11488 / FDC 602W) (Vibrio succinogenes).